Consider the following 106-residue polypeptide: uncharacterized protein (106 aa).

This sequence belongs to the SUI1 family.

This is an uncharacterized protein from Haemophilus influenzae (strain ATCC 51907 / DSM 11121 / KW20 / Rd).